The sequence spans 321 residues: MATH domain and coiled-coil domain-containing protein At3g58410 (321 aa).

Positions 6 to 128 constitute an MATH domain; the sequence is GKKFAWVIKN…NGELMIVAEV (123 aa). Residues 255–310 are a coiled coil; the sequence is KVDWLEKKLDQVRDKKEKERSCLAKLQETEETLLKLKQKCTELDALMDTEKAELSA.

This is MATH domain and coiled-coil domain-containing protein At3g58410 from Arabidopsis thaliana (Mouse-ear cress).